We begin with the raw amino-acid sequence, 317 residues long: tRNA dimethylallyltransferase (317 aa).

An ATP-binding site is contributed by 16–23 (GPTASGKS). 18-23 (TASGKS) lines the substrate pocket. Interaction with substrate tRNA regions lie at residues 41–44 (DSAQ), 165–169 (QRIQR), and 247–252 (RCVGYR).

The protein belongs to the IPP transferase family. As to quaternary structure, monomer. It depends on Mg(2+) as a cofactor.

The catalysed reaction is adenosine(37) in tRNA + dimethylallyl diphosphate = N(6)-dimethylallyladenosine(37) in tRNA + diphosphate. Its function is as follows. Catalyzes the transfer of a dimethylallyl group onto the adenine at position 37 in tRNAs that read codons beginning with uridine, leading to the formation of N6-(dimethylallyl)adenosine (i(6)A). This chain is tRNA dimethylallyltransferase, found in Nitrosomonas eutropha (strain DSM 101675 / C91 / Nm57).